The sequence spans 126 residues: Large ribosomal subunit protein bL20 (126 aa).

This sequence belongs to the bacterial ribosomal protein bL20 family.

Binds directly to 23S ribosomal RNA and is necessary for the in vitro assembly process of the 50S ribosomal subunit. It is not involved in the protein synthesizing functions of that subunit. The protein is Large ribosomal subunit protein bL20 of Parafrankia sp. (strain EAN1pec).